We begin with the raw amino-acid sequence, 82 residues long: U10-myrmicitoxin-Mri1c (82 aa).

Positions Met-1 to Ala-26 are cleaved as a signal peptide. A propeptide spanning residues Lys-27–Pro-52 is cleaved from the precursor. An Isoleucine amide modification is found at Ile-81.

The protein belongs to the formicidae venom precursor-01 superfamily. In terms of tissue distribution, expressed by the venom gland.

It is found in the secreted. Functionally, induces paralysis 5 minutes after injection into blowflies (L.caesar). In most cases is not lethal 24 hours after injection, but paralysis is irreversible. May have antimicrobial properties, like most ant linear peptides. The chain is U10-myrmicitoxin-Mri1c from Manica rubida (European giant red ant).